A 654-amino-acid chain; its full sequence is Sucrose:sucrose 1-fructosyltransferase (654 aa).

A propeptide spanning residues 1-106 is cleaved from the precursor; sequence MESSAVVPGT…VSEKASGAYS (106 aa). The N-linked (GlcNAc...) asparagine glycan is linked to Asn-32. The active site involves Asp-136. N-linked (GlcNAc...) asparagine glycosylation is found at Asn-328, Asn-457, Asn-491, Asn-506, and Asn-625.

It belongs to the glycosyl hydrolase 32 family. As to quaternary structure, monomer. As to expression, accumulates at the base of growing leaves.

The protein localises to the vacuole. The catalysed reaction is 2 sucrose = 1(F)-beta-D-fructosylsucrose + D-glucose. Transferase involved in fructan biosynthesis that catalyzes the production of 1-kestose (fructose and nystose to a lower extent) from sucrose. Also exhibits some hydrolase activity toward 1-kestose, thus producing fructose and sucrose. A weak fructosyltransferase activity leads to the formation of nystose from 1-kestose. This Festuca arundinacea (Tall fescue) protein is Sucrose:sucrose 1-fructosyltransferase (1-SST).